The sequence spans 364 residues: Protein spindle-F (364 aa).

The tract at residues 1 to 26 (MEASAAKITPMASSMSASGSTNSPSS) is disordered. Residues 9–26 (TPMASSMSASGSTNSPSS) are compositionally biased toward low complexity. Positions 32–114 (ALQVALQTIK…GMVSNENRRL (83 aa)) form a coiled coil. Position 53 is a phosphoserine (Ser53). The interval 56 to 75 (EENQQLREASSRSEGAPRAN) is disordered. Phosphoserine occurs at positions 85, 172, and 202. Residues 210–243 (AKRCLDGLQELRREAMKQQQELRSVMTLLENRIA) adopt a coiled-coil conformation. Phosphoserine occurs at positions 264 and 270. The segment at 310-336 (EKTCPMCGKQYSSQVSFNAFREHVEMH) adopts a UBZ1-type zinc-finger fold. Zn(2+)-binding residues include Cys313 and Cys316. Ser325 is subject to Phosphoserine. The Zn(2+) site is built by His332 and His336. Ser349 carries the post-translational modification Phosphoserine.

As to quaternary structure, forms homooligomers. Interacts with the dynein light chain ctp. Interacts (via C-terminus) with IKKepsilon; this leads to phosphorylation of spn-F. Forms ternary complexes with ctp and IKKepsilon; this is required for spn-F redistribution from puncta in larval neurons and for dendrite pruning. Interacts with ctp and IKKepsilon through distinct regions. Interacts (via C-terminus) with jvl. Post-translationally, phosphorylated by IKKepsilon. Phosphorylation is required for spn-F neuronal distribution and dendrite pruning and reduces spn-F homooligomerization. It does not lead to spn-F degradation. In pupal bristles, localizes to the bristle tip throughout the elongation period (at protein level).

It is found in the cytoplasm. The protein localises to the cytoskeleton. It localises to the cell projection. Its subcellular location is the axon. The protein resides in the dendrite. It is found in the perikaryon. Plays a role in oocyte axis determination and microtubule organization during oogenesis. Also required for polarized organization of the bristle. Required, with jvl, for activation of the kinase IKKepsilon in the germ line. Also required for localization of IKKepsilon to the distal tip of elongating bristles by acting as an adapter linking IKKepsilon and cytoplasmic dynein. Involved in dendrite pruning in larval sensory neurons during metamorphosis. The polypeptide is Protein spindle-F (Drosophila melanogaster (Fruit fly)).